A 71-amino-acid polypeptide reads, in one-letter code: MIPRLLPFFASLLFAALLFPGDIPPGIRNTVCLMQQGHCRLFMCRSGERKGDICSDPWNRCCVPYSVKDRR.

Positions 1 to 19 are cleaved as a signal peptide; it reads MIPRLLPFFASLLFAALLF. Cystine bridges form between Cys-32/Cys-61, Cys-39/Cys-54, and Cys-44/Cys-62.

Belongs to the beta-defensin family.

Its subcellular location is the secreted. Its function is as follows. Has antimicrobial activity against E.coli. Plays a role in the defense response in the male reproductive tract, contributing to sperm maturation, storage and protection. The sequence is that of Sperm-associated antigen 11A from Mus musculus (Mouse).